We begin with the raw amino-acid sequence, 156 residues long: Ribosome maturation factor RimP (156 aa).

Belongs to the RimP family.

It is found in the cytoplasm. In terms of biological role, required for maturation of 30S ribosomal subunits. This Bacillus subtilis (strain 168) protein is Ribosome maturation factor RimP.